Reading from the N-terminus, the 1416-residue chain is Tiny macrocysts protein B (1416 aa).

The next 8 membrane-spanning stretches (helical) occupy residues Ile-47–His-67, Phe-93–Phe-113, Phe-140–Leu-160, Ala-185–Phe-205, Val-231–Pro-251, Leu-253–Leu-273, Ser-285–Asn-305, and Ile-315–Phe-335. Residues Leu-356–Ser-372 show a composition bias toward basic and acidic residues. Disordered stretches follow at residues Leu-356 to Lys-377 and Ile-662 to Lys-691. The next 2 membrane-spanning stretches (helical) occupy residues Trp-706–Phe-726 and Ala-953–Phe-973. Disordered stretches follow at residues Arg-1018 to Met-1103 and Asn-1119 to Thr-1144. Positions Thr-1024 to Asn-1039 are enriched in acidic residues. Low complexity-rich tracts occupy residues Asn-1048–Asn-1062 and Ser-1083–Ser-1094. The span at Gln-1123–Thr-1144 shows a compositional bias: basic and acidic residues. 3 helical membrane-spanning segments follow: residues Ile-1179–Val-1199, Trp-1325–Phe-1345, and Val-1358–Phe-1378.

It is found in the membrane. Functionally, regulator of the cAMP signaling pathway specific to sexual development. Controls the levels of external cAMP by regulating the expression of phosphodiesterase pdsA and its inhibitor pdiA. The chain is Tiny macrocysts protein B (tmcB) from Dictyostelium discoideum (Social amoeba).